The chain runs to 260 residues: uncharacterized protein (260 aa).

The protein belongs to the MG032/MG096/MG288 family.

This is an uncharacterized protein from Mycoplasma pneumoniae (strain ATCC 29342 / M129 / Subtype 1) (Mycoplasmoides pneumoniae).